We begin with the raw amino-acid sequence, 149 residues long: Large ribosomal subunit protein bL9 (149 aa).

The protein belongs to the bacterial ribosomal protein bL9 family.

In terms of biological role, binds to the 23S rRNA. The chain is Large ribosomal subunit protein bL9 from Anaeromyxobacter dehalogenans (strain 2CP-C).